Consider the following 191-residue polypeptide: MKVQSEIIEKLEIFQNLIKKWNKSINLISDNTIPNFWQRHILDSLQLMQYISNKEIHLIDIGSGAGFPGIVLSIAGVTKVSLIEADLRKCIFLAKASKISNNSIQIINQRIEKIEIDCSILTCRAFSNLNTIFNYTQNISVREKFLLLKGKSYLTEIVEAKERWSFDYLIHQSITCGSGKILEINNLTKII.

Residues Gly62, Phe67, 111–112 (IE), and Arg124 contribute to the S-adenosyl-L-methionine site.

The protein belongs to the methyltransferase superfamily. RNA methyltransferase RsmG family.

The protein localises to the cytoplasm. The catalysed reaction is guanosine(527) in 16S rRNA + S-adenosyl-L-methionine = N(7)-methylguanosine(527) in 16S rRNA + S-adenosyl-L-homocysteine. In terms of biological role, specifically methylates the N7 position of guanine in position 527 of 16S rRNA. The protein is Ribosomal RNA small subunit methyltransferase G of Rickettsia prowazekii (strain Madrid E).